A 368-amino-acid polypeptide reads, in one-letter code: MWRMSYFWHEPYWLPRNVTWPEVPAKFVDLLVPIYLAIPLVIIRILWESTIGVTYLYFRTNAYASRKNITLLGCMWEHMTGGFASVSRAKKILECFWRFSYYTFAFLYGLYVMKNSSWLYDVKQCWIGYPFHPVPDTIWWYYMIETGFYYSLLIGSTFDVRRSDFWQLMVHHVITIFLLSSSWTINFVRVGTLILLSHDVSDVFLEGGKLVRYDAHNKNMTNFMFVLFFSSWVATRLIYYPFIVIRSAVTEAAALIQPDYILWDYQLSPPYAPRLIVFALILLFFLHIFWTFIILRIAYRTSTGGQAKDVRSDSDSDYDEEEMARRERTRLLKKKKNKVSPSTDDDDDEGEEEKNDRKARHRRAPRKE.

Transmembrane regions (helical) follow at residues 27 to 47 (FVDL…RILW), 92 to 112 (ILEC…GLYV), 138 to 158 (IWWY…GSTF), 165 to 185 (FWQL…SWTI), 191 to 211 (GTLI…GKLV), 225 to 245 (FVLF…FIVI), and 275 to 295 (LIVF…FIIL). Residues 90 to 303 (KKILECFWRF…ILRIAYRTST (214 aa)) enclose the TLC domain. Residues 306 to 368 (QAKDVRSDSD…ARHRRAPRKE (63 aa)) are disordered. Acidic residues predominate over residues 343–353 (TDDDDDEGEEE). Residues 357-368 (RKARHRRAPRKE) show a composition bias toward basic residues.

This sequence belongs to the sphingosine N-acyltransferase family.

The protein resides in the membrane. The enzyme catalyses a very long-chain fatty acyl-CoA + a sphingoid base = an N-(very-long-chain fatty acyl)-sphingoid base + CoA + H(+). It catalyses the reaction 15-methylhexadecasphinganine + a fatty acyl-CoA = an N-acyl-15-methylhexadecasphinganine + CoA + H(+). The catalysed reaction is a fatty acyl-CoA + sphinganine = an N-acylsphinganine + CoA + H(+). It carries out the reaction sphinganine + tetradecanoyl-CoA = N-(tetradecanoyl)-sphinganine + CoA + H(+). The enzyme catalyses hexacosanoyl-CoA + sphinganine = N-hexacosanoylsphinganine + CoA + H(+). The protein operates within lipid metabolism; sphingolipid metabolism. In terms of biological role, catalyzes the acylation of sphingoid bases to form ceramides, which are key players in cell signaling events such as extending lifespan and enhancing stress resistance. C.elegans contain specific sphingoid bases, which are unique or different in structure compared to the sphingoid bases found in other animals. Two examples of these distinctive compounds are: 15-methylhexadecasphinganine and 15-methylhexadecasphing-4-enine. Exhibits substrate preference for fatty acyl-coA chains containing carbon chain length (C16-C18) and very long chains (24 carbons and more). This Caenorhabditis elegans protein is Ceramide synthase hyl-1 (hyl-1).